The sequence spans 138 residues: Histone H3-like centromeric protein A (138 aa).

The disordered stretch occupies residues 1 to 40 (MGPRRQKRKPETPRRRPASPAPAAPRPTPSLGTSSRPLAR). Gly-2 is subject to N,N,N-trimethylglycine. Ser-19 carries the post-translational modification Phosphoserine. Residues 19-28 (SPAPAAPRPT) show a composition bias toward pro residues. The important for flexibility of DNA ends that protrude from nucleosomes stretch occupies residues 37-52 (PLARRRHTVLKEIRTL). The H3-like stretch occupies residues 39–138 (ARRRHTVLKE…RIRGIQEGLG (100 aa)). The CATD stretch occupies residues 73–114 (CVQFTRGVDFNWQAQALLALQEAAEAFLVHLFEDAYLLSLHA).

This sequence belongs to the histone H3 family. As to quaternary structure, component of centromeric nucleosomes, where DNA is wrapped around a histone octamer core. The octamer contains two molecules each of H2A, H2B, CENPA and H4 assembled in one CENPA-H4 heterotetramer and two H2A-H2B heterodimers. CENPA modulates the DNA-binding characteristics of nucleosomes so that protruding DNA ends have higher flexibility than in nucleosomes containing conventional histone H3. Inhibits binding of histone H1 to nucleosomes, since histone H1 binds preferentially to rigid DNA linkers that protrude from nucleosomes. Nucleosomes containing CENPA also contain histone H2A variants such as MACROH2A and H2A.Z/H2AZ1. The CENPA-H4 heterotetramer is more compact and structurally more rigid than corresponding H3-H4 heterotetramers. Can assemble into nucleosomes that contain both CENPA and histone H3.3; these nucleosomes interact with a single CENPC chain. Heterotrimer composed of HJURP, CENPA and histone H4, where HJURP interacts with the dimer formed by CENPA and histone H4 and prevents tetramerization of CENPA and H4. Component of the CENPA-NAC complex, at least composed of CENPA, CENPC, CENPH, CENPM, CENPN, CENPT and CENPU. Interacts (via CATD domain) with HJURP; the interaction is direct and is required for its localization to centromeres. Interacts with CENPC, CENPN and CENPT; interaction is direct. Part of a centromere complex consisting of CENPA, CENPT and CENPW. Identified in centromere complexes containing histones H2A, H2B and H4, and at least CENPA, CENPB, CENPC, CENPT, CENPN, HJURP, SUPT16H, SSRP1 and RSF1. Can self-associate. The CENPA-H4 heterotetramer can bind DNA by itself (in vitro). Interacts with CDK1, PPP1CA and RBBP7. Trimethylated by NTMT1 at the N-terminal glycine after cleavage of Met-1. Methylation is low before incorporation into nucleosomes and increases with cell cycle progression, with the highest levels in mitotic nucleosomes. In terms of processing, poly-ADP-ribosylated by PARP1.

It is found in the nucleus. The protein localises to the chromosome. It localises to the centromere. Functionally, histone H3-like nucleosomal protein that is specifically found in centromeric nucleosomes. Replaces conventional H3 in the nucleosome core of centromeric chromatin that serves as an assembly site for the inner kinetochore. The presence of CENPA subtly modifies the nucleosome structure and the way DNA is wrapped around the nucleosome and gives rise to protruding DNA ends that are less well-ordered and rigid compared to nucleosomes containing histone H3. May serve as an epigenetic mark that propagates centromere identity through replication and cell division. Required for recruitment and assembly of kinetochore proteins, and as a consequence required for progress through mitosis, chromosome segregation and cytokinesis. This Bos taurus (Bovine) protein is Histone H3-like centromeric protein A (CENPA).